We begin with the raw amino-acid sequence, 213 residues long: tRNA (guanine-N(7)-)-methyltransferase (213 aa).

4 residues coordinate S-adenosyl-L-methionine: E44, E69, D96, and D118. The active site involves D118. Substrate-binding positions include K122, D154, and 191-194; that span reads TEYE.

The protein belongs to the class I-like SAM-binding methyltransferase superfamily. TrmB family.

It carries out the reaction guanosine(46) in tRNA + S-adenosyl-L-methionine = N(7)-methylguanosine(46) in tRNA + S-adenosyl-L-homocysteine. Its pathway is tRNA modification; N(7)-methylguanine-tRNA biosynthesis. Its function is as follows. Catalyzes the formation of N(7)-methylguanine at position 46 (m7G46) in tRNA. The protein is tRNA (guanine-N(7)-)-methyltransferase of Exiguobacterium sibiricum (strain DSM 17290 / CCUG 55495 / CIP 109462 / JCM 13490 / 255-15).